The following is a 640-amino-acid chain: Uromodulin (640 aa).

The first 24 residues, 1–24, serve as a signal peptide directing secretion; the sequence is MGQPSLTWMLMVVVASWFITTAAT. The 37-residue stretch at 28 to 64 folds into the EGF-like 1 domain; the sequence is EARWCSECHSNATCTEDEAVTTCTCQEGFTGDGLTCV. Cystine bridges form between Cys-32/Cys-41, Cys-35/Cys-50, Cys-52/Cys-63, Cys-69/Cys-83, Cys-77/Cys-92, Cys-94/Cys-106, Cys-112/Cys-126, Cys-120/Cys-135, Cys-137/Cys-148, Cys-150/Cys-161, Cys-155/Cys-170, Cys-174/Cys-267, Cys-195/Cys-282, Cys-217/Cys-255, Cys-223/Cys-287, Cys-248/Cys-256, Cys-297/Cys-306, Cys-300/Cys-315, Cys-317/Cys-347, Cys-335/Cys-425, and Cys-366/Cys-389. N-linked (GlcNAc...) asparagine glycosylation occurs at Asn-38. The EGF-like 2; calcium-binding domain occupies 65 to 107; the sequence is DLDECAIPGAHNCSANSSCVNTPGSFSCVCPEGFRLSPGLGCT. Residues Asn-76 and Asn-80 are each glycosylated (N-linked (GlcNAc...) asparagine). The EGF-like 3; calcium-binding domain maps to 108-149; that stretch reads DVDECAEPGLSHCHALATCVNVVGSYLCVCPAGYRGDGWHCE. Residues 150-171 form a beta hairpin region; sequence CSPGSCGPGLDCVPEGDALVCA. The tract at residues 172-291 is D10C; the sequence is DPCQAHRTLD…CHLAYCTDPS (120 aa). Asn-232 carries N-linked (GlcNAc...) (complex) asparagine glycosylation. N-linked (GlcNAc...) (high mannose) asparagine glycosylation is present at Asn-275. Residues 292 to 323 enclose the EGF-like 4 domain; that stretch reads SVEGTCEECSIDEDCKSNNGRWHCQCKQDFNI. Residue Asn-322 is glycosylated (N-linked (GlcNAc...) (complex) asparagine). The segment at 334–429 is ZP-N; the sequence is ECGANDMKVS…KINFACSYPL (96 aa). Positions 334–589 constitute a ZP domain; the sequence is ECGANDMKVS…PTCSGTRFRS (256 aa). N-linked (GlcNAc...) (complex) asparagine glycosylation is present at Asn-396. The flexible ZP-N/ZP-C linker; important for secretion and polymerization into filaments stretch occupies residues 430–453; that stretch reads DMKVSLKTALQPMVSALNIRVGGT. The interval 454–465 is internal hydrophobic patch (IHP); it reads GMFTVRMALFQT. Residues 454–589 are ZP-C; sequence GMFTVRMALF…PTCSGTRFRS (136 aa). 3 cysteine pairs are disulfide-bonded: Cys-506-Cys-566, Cys-527-Cys-582, and Cys-571-Cys-578. N-linked (GlcNAc...) (complex) asparagine; alternate glycosylation occurs at Asn-513. Asn-513 is a glycosylation site (N-linked (GlcNAc...) (high mannose) asparagine; alternate). The interval 586 to 589 is essential for cleavage by HPN; it reads RFRS. The tract at residues 598 to 606 is external hydrophobic patch (EHP); regulates polymerization into filaments; it reads VLNLGPITR. A lipid anchor (GPI-anchor amidated serine) is attached at Ser-614. A propeptide spans 615–640 (removed in mature form); sequence RAFSSLGLLKVWLPLLLSATLTLTFQ.

Homodimer that then polymerizes into long filaments. The filaments can additionally assemble laterally to form a sheet. The filaments consist of a zigzag-shaped backbone with laterally protruding arms which interact with bacterial adhesin fimH. Two fimH molecules can bind to a single UMOD monomer. N-glycosylated. N-glycan heterogeneity at Asn-232: Hex7HexNAc6 (major) and dHex1Hex7HexNAc6 (minor); at Asn-322: dHex1Hex6HexNAc5 (minor), dHex1Hex7HexNAc6 (major) and dHex1Hex8HexNAc7 (minor); at Asn-396: Hex6HexNAc5 (major), dHex1Hex6HexNAc5 (minor) and Hex7HexNAc6 (minor). Glycosylated Asn-232 interacts with E.coli adhesin fimH. Other complex glycosylation sites may serve as binding sites for proteins from other bacteria inclduding K.pneumoniae, P.aeruginosa and S.mitis. In terms of processing, proteolytically cleaved at a conserved C-terminal proteolytic cleavage site to generate the secreted form found in urine. This cleavage is catalyzed by HPN. In terms of tissue distribution, expressed in the tubular cells of the kidney. Most abundant protein in normal urine (at protein level). Synthesized exclusively in the kidney. Expressed exclusively by epithelial cells of the thick ascending limb of Henle's loop (TALH) and of distal convoluted tubule lumen.

The protein resides in the apical cell membrane. It is found in the basolateral cell membrane. Its subcellular location is the cell projection. It localises to the cilium membrane. The protein localises to the secreted. Functionally, functions in biogenesis and organization of the apical membrane of epithelial cells of the thick ascending limb of Henle's loop (TALH), where it promotes formation of complex filamentous gel-like structure that may play a role in the water barrier permeability. May serve as a receptor for binding and endocytosis of cytokines (IL-1, IL-2) and TNF. Facilitates neutrophil migration across renal epithelia. In terms of biological role, in the urine, may contribute to colloid osmotic pressure, retards passage of positively charged electrolytes, and inhibits formation of liquid containing supersaturated salts and subsequent formation of salt crystals. Protects against urinary tract infections by binding to type 1 fimbriated E.coli. Binds to bacterial adhesin fimH which mediates the stable formation of bacterial aggregates, prevents the binding of E.coli to uroplakins UPK1A and UPK1B which act as urothelial receptors for type I fimbriae, and allows for pathogen clearance through micturation. Also promotes aggregation of other bacteria including K.pneumoniae, P.aeruginosa and S.mitis and so may also protect against other uropathogens. The chain is Uromodulin (UMOD) from Homo sapiens (Human).